The sequence spans 403 residues: MKSVEEQLALIKRGADELLVEAELVEKLKRGQPLRIKAGFDPTAPDLHLGHTVLINKLRQFQDLGHQIIFLIGDFTGMIGDPSGKSATRPPLTREQVLDYAETYKSQVFKILDPAKTEVAFNSTWMDQLSPADFIRLSSQYTVARMLERDDFDKRYKSNQSIAIHEFLYPLVQGYDSVALKADVELGGTDQKFNLLMGRELQRAYGQEPQCILTMPLLEGLDGVKKMSKSLGNYVGIQEAPGIMYSKLVSIPDSLMWRYFELLSFRSMEEIDGLKADCEAGANPRDIKIKLAEELVARFHGEEAAANAHRSAGNRMKEGELPDDLPELSVAAAEDMPISAVLNKAGLVKNAAVARDLLASGGVRIDGEVVDRSFVFKLGTTHVCQAGKKAFGRVTLVSEESSN.

Positions 42–51 (PTAPDLHLGH) match the 'HIGH' region motif. The 'KMSKS' region signature appears at 226–230 (KMSKS). An ATP-binding site is contributed by Lys229. In terms of domain architecture, S4 RNA-binding spans 336 to 396 (MPISAVLNKA…GKKAFGRVTL (61 aa)).

This sequence belongs to the class-I aminoacyl-tRNA synthetase family. TyrS type 2 subfamily. As to quaternary structure, homodimer.

Its subcellular location is the cytoplasm. It catalyses the reaction tRNA(Tyr) + L-tyrosine + ATP = L-tyrosyl-tRNA(Tyr) + AMP + diphosphate + H(+). Functionally, catalyzes the attachment of tyrosine to tRNA(Tyr) in a two-step reaction: tyrosine is first activated by ATP to form Tyr-AMP and then transferred to the acceptor end of tRNA(Tyr). The polypeptide is Tyrosine--tRNA ligase (Pseudomonas syringae pv. syringae (strain B728a)).